A 251-amino-acid chain; its full sequence is 1-(5-phosphoribosyl)-5-[(5-phosphoribosylamino)methylideneamino] imidazole-4-carboxamide isomerase (251 aa).

Asp-8 functions as the Proton acceptor in the catalytic mechanism. The Proton donor role is filled by Asp-131.

The protein belongs to the HisA/HisF family.

The protein localises to the cytoplasm. It catalyses the reaction 1-(5-phospho-beta-D-ribosyl)-5-[(5-phospho-beta-D-ribosylamino)methylideneamino]imidazole-4-carboxamide = 5-[(5-phospho-1-deoxy-D-ribulos-1-ylimino)methylamino]-1-(5-phospho-beta-D-ribosyl)imidazole-4-carboxamide. It participates in amino-acid biosynthesis; L-histidine biosynthesis; L-histidine from 5-phospho-alpha-D-ribose 1-diphosphate: step 4/9. This Burkholderia cenocepacia (strain HI2424) protein is 1-(5-phosphoribosyl)-5-[(5-phosphoribosylamino)methylideneamino] imidazole-4-carboxamide isomerase.